We begin with the raw amino-acid sequence, 182 residues long: MRVLGIDPGLRRTGFGVIDAEGMRLRYVASGTIVVPPALALPERLKVILDNLREVARETRPDVAALEIVFLNTNPASTLLLGQARGAALCALADSALDVHEYTALQIKKAVMGTGRAAKEQVQMMVQRLLSLDGTPAPDSADALACAICHAHVGPLHDKLDRLGTAAQLGSRPRLRNGRLVG.

Catalysis depends on residues Asp-7, Glu-67, and Asp-139. The Mg(2+) site is built by Asp-7, Glu-67, and Asp-139.

Belongs to the RuvC family. In terms of assembly, homodimer which binds Holliday junction (HJ) DNA. The HJ becomes 2-fold symmetrical on binding to RuvC with unstacked arms; it has a different conformation from HJ DNA in complex with RuvA. In the full resolvosome a probable DNA-RuvA(4)-RuvB(12)-RuvC(2) complex forms which resolves the HJ. The cofactor is Mg(2+).

The protein resides in the cytoplasm. It catalyses the reaction Endonucleolytic cleavage at a junction such as a reciprocal single-stranded crossover between two homologous DNA duplexes (Holliday junction).. Its function is as follows. The RuvA-RuvB-RuvC complex processes Holliday junction (HJ) DNA during genetic recombination and DNA repair. Endonuclease that resolves HJ intermediates. Cleaves cruciform DNA by making single-stranded nicks across the HJ at symmetrical positions within the homologous arms, yielding a 5'-phosphate and a 3'-hydroxyl group; requires a central core of homology in the junction. The consensus cleavage sequence is 5'-(A/T)TT(C/G)-3'. Cleavage occurs on the 3'-side of the TT dinucleotide at the point of strand exchange. HJ branch migration catalyzed by RuvA-RuvB allows RuvC to scan DNA until it finds its consensus sequence, where it cleaves and resolves the cruciform DNA. This chain is Crossover junction endodeoxyribonuclease RuvC, found in Bordetella pertussis (strain Tohama I / ATCC BAA-589 / NCTC 13251).